A 360-amino-acid polypeptide reads, in one-letter code: Chorismate synthase (360 aa).

Arg-46 serves as a coordination point for NADP(+). Residues Arg-123–Ser-125, Asn-235–Ala-236, Gly-275, Lys-290–Ser-294, and Arg-316 contribute to the FMN site.

The protein belongs to the chorismate synthase family. In terms of assembly, homotetramer. FMNH2 serves as cofactor.

It carries out the reaction 5-O-(1-carboxyvinyl)-3-phosphoshikimate = chorismate + phosphate. The protein operates within metabolic intermediate biosynthesis; chorismate biosynthesis; chorismate from D-erythrose 4-phosphate and phosphoenolpyruvate: step 7/7. Functionally, catalyzes the anti-1,4-elimination of the C-3 phosphate and the C-6 proR hydrogen from 5-enolpyruvylshikimate-3-phosphate (EPSP) to yield chorismate, which is the branch point compound that serves as the starting substrate for the three terminal pathways of aromatic amino acid biosynthesis. This reaction introduces a second double bond into the aromatic ring system. The polypeptide is Chorismate synthase (Wolinella succinogenes (strain ATCC 29543 / DSM 1740 / CCUG 13145 / JCM 31913 / LMG 7466 / NCTC 11488 / FDC 602W) (Vibrio succinogenes)).